Here is a 683-residue protein sequence, read N- to C-terminus: Protein kinase C eta type (683 aa).

A C2 domain is found at 1-118 (MSSGTMKFNG…LRTAGTSDTF (118 aa)). Ser-28 and Ser-32 each carry phosphoserine. Phorbol-ester/DAG-type zinc fingers lie at residues 171–222 (GHKF…VTAC) and 245–295 (PHKF…APNC). Ser-317 bears the Phosphoserine mark. Residues 355–614 (FEFIRVLGKG…EHEILRHPFF (260 aa)) form the Protein kinase domain. Residues 361 to 369 (LGKGSFGKV) and Lys-384 contribute to the ATP site. Asp-479 serves as the catalytic Proton acceptor. Thr-513 bears the Phosphothreonine; by PDPK1 mark. An AGC-kinase C-terminal domain is found at 615 to 683 (KEIDWVQLNH…FSYVSPELQP (69 aa)). Position 656 is a phosphothreonine (Thr-656). Position 675 is a phosphoserine (Ser-675).

Belongs to the protein kinase superfamily. AGC Ser/Thr protein kinase family. PKC subfamily. Interacts with FYN. Interacts with RALA. Interacts with DGKQ.

Its subcellular location is the cytoplasm. The enzyme catalyses L-seryl-[protein] + ATP = O-phospho-L-seryl-[protein] + ADP + H(+). The catalysed reaction is L-threonyl-[protein] + ATP = O-phospho-L-threonyl-[protein] + ADP + H(+). Its activity is regulated as follows. Novel PKCs (PRKCD, PRKCE, PRKCH and PRKCQ) are calcium-insensitive, but activated by diacylglycerol (DAG) and phosphatidylserine. Three specific sites; Thr-513 (activation loop of the kinase domain), Thr-656 (turn motif) and Ser-675 (hydrophobic region), need to be phosphorylated for its full activation. Functionally, calcium-independent, phospholipid- and diacylglycerol (DAG)-dependent serine/threonine-protein kinase that is involved in the regulation of cell differentiation in keratinocytes and pre-B cell receptor, mediates regulation of epithelial tight junction integrity and foam cell formation, and is required for glioblastoma proliferation and apoptosis prevention in MCF-7 cells. In keratinocytes, binds and activates the tyrosine kinase FYN, which in turn blocks epidermal growth factor receptor (EGFR) signaling and leads to keratinocyte growth arrest and differentiation. Associates with the cyclin CCNE1-CDK2-CDKN1B complex and inhibits CDK2 kinase activity, leading to RB1 dephosphorylation and thereby G1 arrest in keratinocytes. In association with RALA activates actin depolymerization, which is necessary for keratinocyte differentiation. In the pre-B cell receptor signaling, functions downstream of BLNK by up-regulating IRF4, which in turn activates L chain gene rearrangement. Regulates epithelial tight junctions (TJs) by phosphorylating occludin (OCLN) on threonine residues, which is necessary for the assembly and maintenance of TJs. In association with PLD2 and via TLR4 signaling, is involved in lipopolysaccharide (LPS)-induced RGS2 down-regulation and foam cell formation. Upon PMA stimulation, mediates glioblastoma cell proliferation by activating the mTOR pathway, the PI3K/AKT pathway and the ERK1-dependent phosphorylation of ELK1. Involved in the protection of glioblastoma cells from irradiation-induced apoptosis by preventing caspase-9 activation. In camptothecin-treated MCF-7 cells, regulates NF-kappa-B upstream signaling by activating IKBKB, and confers protection against DNA damage-induced apoptosis. Promotes oncogenic functions of ATF2 in the nucleus while blocking its apoptotic function at mitochondria. Phosphorylates ATF2 which promotes its nuclear retention and transcriptional activity and negatively regulates its mitochondrial localization. This is Protein kinase C eta type (Prkch) from Rattus norvegicus (Rat).